We begin with the raw amino-acid sequence, 456 residues long: MISTNNSSTPETIIALSTPSGAGALAVVKLSGSRALEIALKLSRRDHLQPRHATLANLWNREDEMMDEAILIYFKAPHSYTAEEVVEIQCHGGTLIARKIIQEALALGARVARAGEFTYRAFLNGRIDLSQAEAIGKLIEAKSDESYKVLLKQLKGELGRYVEGVRGSLVEILAYAEVSIDYAEEDLPSDLEARMVEKIERIAEDLERIYQGSKRRSSLVEGYKLAIIGRPNVGKSSLLNALLLWERAIVSDIPGTTRDTIEESLHLGNHWVRIVDTAGIREAQDAIEKIGIERTLLALKESDMVLALFDSSQSLSPEDEQIKELLRAHQENRRILVLFNKSDLSRELQDSELESYPHRYISAKEGGVEELLSLLASWLDEQGGGEELMLTSERQLLCVKSALGELKEARDRLIEGELELFAYHIQGALKELSLITRPYETSELLDVMFGQFCLGK.

K29, E87, and R126 together coordinate (6S)-5-formyl-5,6,7,8-tetrahydrofolate. In terms of domain architecture, TrmE-type G spans 222–380 (GYKLAIIGRP…LLSLLASWLD (159 aa)). Position 232 (N232) interacts with K(+). Residues 232–237 (NVGKSS), 251–257 (SDIPGTT), and 276–279 (DTAG) each bind GTP. S236 is a Mg(2+) binding site. K(+)-binding residues include S251, I253, and T256. Residue T257 coordinates Mg(2+). Position 456 (K456) interacts with (6S)-5-formyl-5,6,7,8-tetrahydrofolate.

This sequence belongs to the TRAFAC class TrmE-Era-EngA-EngB-Septin-like GTPase superfamily. TrmE GTPase family. As to quaternary structure, homodimer. Heterotetramer of two MnmE and two MnmG subunits. K(+) is required as a cofactor.

Its subcellular location is the cytoplasm. Its function is as follows. Exhibits a very high intrinsic GTPase hydrolysis rate. Involved in the addition of a carboxymethylaminomethyl (cmnm) group at the wobble position (U34) of certain tRNAs, forming tRNA-cmnm(5)s(2)U34. This chain is tRNA modification GTPase MnmE, found in Wolinella succinogenes (strain ATCC 29543 / DSM 1740 / CCUG 13145 / JCM 31913 / LMG 7466 / NCTC 11488 / FDC 602W) (Vibrio succinogenes).